The chain runs to 647 residues: Indolepyruvate oxidoreductase subunit IorA (647 aa).

2 consecutive 4Fe-4S ferredoxin-type domains span residues 585-614 (PIYH…WDPE) and 616-645 (KKAK…PMKE). Residues cysteine 594, cysteine 597, cysteine 600, cysteine 606, cysteine 625, cysteine 628, cysteine 631, and cysteine 635 each coordinate [4Fe-4S] cluster.

As to quaternary structure, heterodimer of the IorA and IorB subunits. The cofactor is [4Fe-4S] cluster.

It catalyses the reaction indole-3-pyruvate + 2 oxidized [2Fe-2S]-[ferredoxin] + CoA = (indol-3-yl)acetyl-CoA + 2 reduced [2Fe-2S]-[ferredoxin] + CO2 + H(+). Its function is as follows. Catalyzes the ferredoxin-dependent oxidative decarboxylation of arylpyruvates. The protein is Indolepyruvate oxidoreductase subunit IorA (iorA) of Thermococcus kodakarensis (strain ATCC BAA-918 / JCM 12380 / KOD1) (Pyrococcus kodakaraensis (strain KOD1)).